Here is a 445-residue protein sequence, read N- to C-terminus: E3 ubiquitin-protein ligase MYLIP (445 aa).

Residues Met-1–Thr-279 enclose the FERM domain. Residues Arg-341 to Cys-363 are disordered. Over residues Pro-350–Cys-363 the composition is skewed to low complexity. Positions 360, 363, and 368 each coordinate Fe cation. Residues Cys-387–Arg-422 form an RING-type zinc finger. The segment at Val-431–Leu-433 is critical for homodimerization.

Homodimer. Interacts with the E2 ubiquitin-conjugating enzyme, UBE2D1 (via RING-type zinc finger). Interacts with myosin regulatory light chain (MRLC) and TMEM4. Autoubiquitinated. As to expression, expressed in developing and adult brain, hippocampus, cerebellum, cerebral cortex, thalamus and substantia nigra. Predominantly found in neurons.

The protein localises to the cytoplasm. It is found in the cell membrane. The catalysed reaction is S-ubiquitinyl-[E2 ubiquitin-conjugating enzyme]-L-cysteine + [acceptor protein]-L-lysine = [E2 ubiquitin-conjugating enzyme]-L-cysteine + N(6)-ubiquitinyl-[acceptor protein]-L-lysine.. The protein operates within protein modification; protein ubiquitination. Can bind 1 iron ion per dimer. Iron binding seems to decrease LDLR degradation activity. Its function is as follows. E3 ubiquitin-protein ligase that mediates ubiquitination and subsequent proteasomal degradation of myosin regulatory light chain (MRLC), LDLR, VLDLR and LRP8. Activity depends on E2 enzymes of the UBE2D family. Proteasomal degradation of MRLC leads to inhibit neurite outgrowth in presence of NGF by counteracting the stabilization of MRLC by saposin-like protein (CNPY2/MSAP) and reducing CNPY2-stimulated neurite outgrowth. Acts as a sterol-dependent inhibitor of cellular cholesterol uptake by mediating ubiquitination and subsequent degradation of LDLR. The chain is E3 ubiquitin-protein ligase MYLIP (Mylip) from Rattus norvegicus (Rat).